Here is a 363-residue protein sequence, read N- to C-terminus: NADH-quinone oxidoreductase subunit H (363 aa).

10 helical membrane passes run 29 to 49 (VLKI…YVVW), 62 to 82 (GPMY…KLLF), 96 to 116 (FIIA…VVPF), 127 to 147 (VGLL…ILAG), 163 to 183 (AAQV…VMIA), 202 to 222 (FFDW…VSGV), 238 to 257 (EIVA…LFFL), 278 to 298 (WLSP…DWLW), 299 to 319 (KGGW…YIWF), and 339 to 359 (FIPL…YGVI).

Belongs to the complex I subunit 1 family. As to quaternary structure, NDH-1 is composed of 14 different subunits. Subunits NuoA, H, J, K, L, M, N constitute the membrane sector of the complex.

It localises to the cell inner membrane. The enzyme catalyses a quinone + NADH + 5 H(+)(in) = a quinol + NAD(+) + 4 H(+)(out). Its function is as follows. NDH-1 shuttles electrons from NADH, via FMN and iron-sulfur (Fe-S) centers, to quinones in the respiratory chain. The immediate electron acceptor for the enzyme in this species is believed to be ubiquinone. Couples the redox reaction to proton translocation (for every two electrons transferred, four hydrogen ions are translocated across the cytoplasmic membrane), and thus conserves the redox energy in a proton gradient. This subunit may bind ubiquinone. This is NADH-quinone oxidoreductase subunit H from Xanthomonas oryzae pv. oryzae (strain MAFF 311018).